The following is a 211-amino-acid chain: Uridine kinase (211 aa).

Position 12 to 19 (G12 to T19) interacts with ATP.

The protein belongs to the uridine kinase family.

The protein resides in the cytoplasm. The enzyme catalyses uridine + ATP = UMP + ADP + H(+). It carries out the reaction cytidine + ATP = CMP + ADP + H(+). It functions in the pathway pyrimidine metabolism; CTP biosynthesis via salvage pathway; CTP from cytidine: step 1/3. It participates in pyrimidine metabolism; UMP biosynthesis via salvage pathway; UMP from uridine: step 1/1. The protein is Uridine kinase (udk) of Bacillus subtilis (strain 168).